Consider the following 874-residue polypeptide: Leucine--tRNA ligase (874 aa).

A 'HIGH' region motif is present at residues 43–53; it reads PYPSGRIHIGH. Residues 630-634 carry the 'KMSKS' region motif; that stretch reads KMSKS. Lys-633 provides a ligand contact to ATP.

The protein belongs to the class-I aminoacyl-tRNA synthetase family.

The protein resides in the cytoplasm. It catalyses the reaction tRNA(Leu) + L-leucine + ATP = L-leucyl-tRNA(Leu) + AMP + diphosphate. In Bradyrhizobium sp. (strain BTAi1 / ATCC BAA-1182), this protein is Leucine--tRNA ligase.